The sequence spans 170 residues: Cathelicidin antimicrobial peptide (170 aa).

The signal sequence occupies residues 1 to 30; sequence MKTQRDGPSLGRWSLVLLLLGLTMPLAITA. Residues 31 to 131 constitute a propeptide, cathelin-like domain (CLD); the sequence is QVLSYQEAVL…DISCDKDERK (101 aa). 2 disulfide bridges follow: Cys-86-Cys-97 and Cys-108-Cys-125. The segment at 150–162 is active core; it reads FKKIGQKINDFLG.

Belongs to the cathelicidin family. In terms of assembly, monomer, homodimer or homotrimer (in vitro). Oligomerizes as tetra- or hexamer in solution (in vitro). Post-translationally, proteolytically cleaved by proteinase PRTN3 into antibacterial peptide LL-37. Proteolytically cleaved by cathepsin CTSG and neutrophil elastase ELANE. In terms of processing, resistant to proteolytic degradation in solution, and when bound to both zwitterionic (mimicking mammalian membranes) and negatively charged membranes (mimicking bacterial membranes). After secretion onto the skin surface, the CAMP gene product is processed by a serine protease-dependent mechanism into multiple novel antimicrobial peptides distinct from and shorter than cathelicidin LL-37. These peptides show enhanced antimicrobial action, acquiring the ability to kill skin pathogens such as S.aureus, E.coli and C.albicans. These peptides have lost the ability to stimulate CXCL8/IL8 release from keratinocytes. The peptides act synergistically, killing bacteria at lower concentrations when present together, and maintain activity at increased salt condition.

It is found in the secreted. Its subcellular location is the vesicle. Antimicrobial protein that is an integral component of the innate immune system. Binds to bacterial lipopolysaccharides (LPS). Acts via neutrophil N-formyl peptide receptors to enhance the release of CXCL2. Postsecretory processing generates multiple cathelicidin antimicrobial peptides with various lengths which act as a topical antimicrobial defense in sweat on skin. The unprocessed precursor form, cathelicidin antimicrobial peptide, inhibits the growth of Gram-negative E.coli and E.aerogenes with efficiencies comparable to that of the mature peptide LL-37 (in vitro). Its function is as follows. Antimicrobial peptide that is an integral component of the innate immune system. Binds to bacterial lipopolysaccharides (LPS). Causes membrane permeabilization by forming transmembrane pores (in vitro). Causes lysis of E.coli. Exhibits antimicrobial activity against Gram-negative bacteria such as P.aeruginosa, S.typhimurium, E.aerogenes, E.coli and P.syringae, Gram-positive bacteria such as L.monocytogenes, S.epidermidis, S.pyogenes and S.aureus, as well as vancomycin-resistant enterococci (in vitro). Exhibits antimicrobial activity against methicillin-resistant S.aureus, P.mirabilis, and C.albicans in low-salt media, but not in media containing 100 mM NaCl (in vitro). Forms chiral supramolecular assemblies with quinolone signal (PQS) molecules of P.aeruginosa, which may lead to interference of bacterial quorum signaling and perturbance of bacterial biofilm formation. May form supramolecular fiber-like assemblies on bacterial membranes. Induces cytokine and chemokine producation as well as TNF/TNFA and CSF2/GMCSF production in normal human keratinocytes. Exhibits hemolytic activity against red blood cells. Functionally, exhibits antimicrobial activity against E.coli and B.megaterium (in vitro). The chain is Cathelicidin antimicrobial peptide from Cebus capucinus (White-faced sapajou).